Here is a 226-residue protein sequence, read N- to C-terminus: MRHFVVFLYMFLALSIPTAFAKKHIVTKKGNHQDITNDNEGENAEKKSAAVAGAVIAGGELALKILTKILDEIGKIDRKIAIGVDNESGLKWTALNTYYKSGASDVTLPYEVENSKALLYTARKSKGPVARGAVGVLAYKMSSGNTLAVMFSVPFDYNLYTNWWNVKIYDGEKKADEKMYNELYNNNNPIKPSIWEKRDLGQDGLKLRGFMTSNGDAKLVIHIEKS.

The first 21 residues, 1-21 (MRHFVVFLYMFLALSIPTAFA), serve as a signal peptide directing secretion. The propeptide occupies 22 to 45 (KKHIVTKKGNHQDITNDNEGENAE). Residues 50 to 59 (AVAGAVIAGG) are plays an important role in the hemolytic activity. Positions 58-77 (GGELALKILTKILDEIGKID) are N-terminal region. Phosphocholine is bound by residues S101, V134, S152, P154, Y180, and Y184. Positions 152 to 167 (SVPFDYNLYTNWWNVK) are trp-rich region, which is important for the binding to lipid membrane. Residues 191-193 (KPS) carry the Cell attachment site, crucial for protein stability motif.

The protein belongs to the actinoporin family. Sea anemone subfamily. Octamer or nonamer in membranes. Monomer in the soluble state.

It is found in the secreted. The protein localises to the nematocyst. The protein resides in the target cell membrane. Functionally, pore-forming protein that forms cations-selective hydrophilic pores of around 1 nm and causes cytolysis. Pore formation is a multi-step process that involves specific recognition of membrane sphingomyelin (but neither cholesterol nor phosphatidylcholine) using aromatic rich region and adjacent phosphocholine (POC) binding site, firm binding to the membrane (mainly driven by hydrophobic interactions) accompanied by the transfer of the N-terminal region to the lipid-water interface and finally pore formation after oligomerization of monomers. This chain is DELTA-thalatoxin-Avl1b, found in Actineria villosa (Okinawan sea anemone).